The following is a 498-amino-acid chain: Probable cytosol aminopeptidase (498 aa).

Mn(2+)-binding residues include K269 and D274. The active site involves K281. Mn(2+) is bound by residues D292, D351, and E353. R355 is an active-site residue.

Belongs to the peptidase M17 family. Mn(2+) is required as a cofactor.

Its subcellular location is the cytoplasm. The catalysed reaction is Release of an N-terminal amino acid, Xaa-|-Yaa-, in which Xaa is preferably Leu, but may be other amino acids including Pro although not Arg or Lys, and Yaa may be Pro. Amino acid amides and methyl esters are also readily hydrolyzed, but rates on arylamides are exceedingly low.. It catalyses the reaction Release of an N-terminal amino acid, preferentially leucine, but not glutamic or aspartic acids.. In terms of biological role, presumably involved in the processing and regular turnover of intracellular proteins. Catalyzes the removal of unsubstituted N-terminal amino acids from various peptides. The chain is Probable cytosol aminopeptidase from Glaesserella parasuis serovar 5 (strain SH0165) (Haemophilus parasuis).